The primary structure comprises 901 residues: HTH-type transcriptional regulator MalT (901 aa).

39–46 (SPAGYGKT) is an ATP binding site. The region spanning 829–894 (ELIRTSPLTQ…AAVQHAQKLL (66 aa)) is the HTH luxR-type domain. Residues 853-872 (NEQIAGELEVAATTIKTHIR) constitute a DNA-binding region (H-T-H motif).

Belongs to the MalT family. In terms of assembly, monomer in solution. Oligomerizes to an active state in the presence of the positive effectors ATP and maltotriose.

Activated by ATP and maltotriose, which are both required for DNA binding. Its function is as follows. Positively regulates the transcription of the maltose regulon whose gene products are responsible for uptake and catabolism of malto-oligosaccharides. Specifically binds to the promoter region of its target genes, recognizing a short DNA motif called the MalT box. The sequence is that of HTH-type transcriptional regulator MalT from Escherichia coli O6:H1 (strain CFT073 / ATCC 700928 / UPEC).